We begin with the raw amino-acid sequence, 562 residues long: Formate--tetrahydrofolate ligase (562 aa).

Residue 70–77 (TPAGEGKS) participates in ATP binding.

This sequence belongs to the formate--tetrahydrofolate ligase family.

The enzyme catalyses (6S)-5,6,7,8-tetrahydrofolate + formate + ATP = (6R)-10-formyltetrahydrofolate + ADP + phosphate. It functions in the pathway one-carbon metabolism; tetrahydrofolate interconversion. The sequence is that of Formate--tetrahydrofolate ligase from Paenarthrobacter aurescens (strain TC1).